The following is a 236-amino-acid chain: 2,3,4,5-tetrahydropyridine-2,6-dicarboxylate N-acetyltransferase (236 aa).

This sequence belongs to the transferase hexapeptide repeat family. DapH subfamily.

The catalysed reaction is (S)-2,3,4,5-tetrahydrodipicolinate + acetyl-CoA + H2O = L-2-acetamido-6-oxoheptanedioate + CoA. The protein operates within amino-acid biosynthesis; L-lysine biosynthesis via DAP pathway; LL-2,6-diaminopimelate from (S)-tetrahydrodipicolinate (acetylase route): step 1/3. Catalyzes the transfer of an acetyl group from acetyl-CoA to tetrahydrodipicolinate. This Clostridium beijerinckii (strain ATCC 51743 / NCIMB 8052) (Clostridium acetobutylicum) protein is 2,3,4,5-tetrahydropyridine-2,6-dicarboxylate N-acetyltransferase.